Here is a 205-residue protein sequence, read N- to C-terminus: Thymidylate kinase (205 aa).

10 to 17 provides a ligand contact to ATP; sequence GTEGVGKS.

The protein belongs to the thymidylate kinase family.

The catalysed reaction is dTMP + ATP = dTDP + ADP. Phosphorylation of dTMP to form dTDP in both de novo and salvage pathways of dTTP synthesis. This chain is Thymidylate kinase, found in Teredinibacter turnerae (strain ATCC 39867 / T7901).